Consider the following 294-residue polypeptide: Ribosomal protein L11 methyltransferase (294 aa).

S-adenosyl-L-methionine contacts are provided by Thr146, Gly167, Asp189, and Asn231.

The protein belongs to the methyltransferase superfamily. PrmA family.

The protein resides in the cytoplasm. The catalysed reaction is L-lysyl-[protein] + 3 S-adenosyl-L-methionine = N(6),N(6),N(6)-trimethyl-L-lysyl-[protein] + 3 S-adenosyl-L-homocysteine + 3 H(+). Methylates ribosomal protein L11. The protein is Ribosomal protein L11 methyltransferase of Photobacterium profundum (strain SS9).